The following is a 124-amino-acid chain: MPTINQLVRQGAXAETIKSKSAAMENSPQRRGVCTRVYTTTPKKPNSALRKVAKVPLTNGFEVISYIGGEGHNLQEHSVVLVRGGRVKDLPGVRYHIVRGSLDLQGVKDRKQSRSKYGAKRPKK.

Asp89 is subject to 3-methylthioaspartic acid. Residues 104 to 124 form a disordered region; sequence LQGVKDRKQSRSKYGAKRPKK. Basic residues predominate over residues 113 to 124; it reads SRSKYGAKRPKK.

The protein belongs to the universal ribosomal protein uS12 family. As to quaternary structure, part of the 30S ribosomal subunit. Contacts proteins S8 and S17. May interact with IF1 in the 30S initiation complex.

Functionally, with S4 and S5 plays an important role in translational accuracy. Its function is as follows. Interacts with and stabilizes bases of the 16S rRNA that are involved in tRNA selection in the A site and with the mRNA backbone. Located at the interface of the 30S and 50S subunits, it traverses the body of the 30S subunit contacting proteins on the other side and probably holding the rRNA structure together. The combined cluster of proteins S8, S12 and S17 appears to hold together the shoulder and platform of the 30S subunit. The protein is Small ribosomal subunit protein uS12 of Thiomonas delicata (Thiomonas cuprina).